We begin with the raw amino-acid sequence, 461 residues long: Anthocyanidin 3-O-glucoside 5-O-glucosyltransferase (461 aa).

The signal sequence occupies residues 1–15 (MSRAHVLLATFPAQG). The Proton acceptor role is filled by His-16. Residue His-16 participates in an anthocyanidin binding. Positions 338, 353, 356, 357, 358, 361, 377, and 378 each coordinate UDP-alpha-D-glucose.

This sequence belongs to the UDP-glycosyltransferase family.

The enzyme catalyses an anthocyanidin 3-O-beta-D-glucoside + UDP-alpha-D-glucose = an anthocyanidin 3,5-di-O-beta-D-glucoside + UDP + 2 H(+). The protein operates within pigment biosynthesis; anthocyanin biosynthesis. Its function is as follows. Catalyzes the glucosylation at the O-5 position of anthocyanidin 3-glucosides to form anthocyanidin 3,5-di-O-glucosides using UDP-glucose as sugar donor. Anthocyanidin 3,5-di-O-glucosides are molecules that are responsible for pigmentation. Also acts on anthocyanidin 3-O-(6-O-malonylglucoside). Much less active with hydroxycinnamoylglucose derivatives. No activity in the absence of the 3-O-glucoside group. The sequence is that of Anthocyanidin 3-O-glucoside 5-O-glucosyltransferase (HGT8) from Verbena hybrida (Garden vervain).